The chain runs to 92 residues: Acylphosphatase (92 aa).

The 88-residue stretch at 5–92 (CIAAYVYGVV…TPFETFKIRY (88 aa)) folds into the Acylphosphatase-like domain. Residues R20 and N38 contribute to the active site.

The protein belongs to the acylphosphatase family.

It catalyses the reaction an acyl phosphate + H2O = a carboxylate + phosphate + H(+). This Yersinia enterocolitica serotype O:8 / biotype 1B (strain NCTC 13174 / 8081) protein is Acylphosphatase (acyP).